Reading from the N-terminus, the 234-residue chain is Dienlactone hydrolase 2 (234 aa).

Residues C143, D167, and H199 contribute to the active site.

Belongs to the dienelactone hydrolase family.

It participates in xenobiotic degradation. In terms of biological role, dienlactone hydrolase; part of the Fusarium detoxification of benzoxazolinone cluster 2 (FDB2) involved in the degradation of benzoxazolinones produced by the host plant. Maize, wheat, and rye produce the 2 benzoxazinone phytoanticipins 2,4-dihy-droxy-7-methoxy-1,4-benzoxazin-3-one (DIMBOA) and 2,4-dihydroxy-1,4-benzoxazin-3-one (DIBOA) that, due to their inherent instability once released, spontaneously degrade to the more stable corresponding benzoxazolinones, 6-methoxy-2-benzoxazolinone (MBOA) and 2-benzoxazolinone (BOA), respectively. The first step in the detoxification of benzoxazolinones involves the hydrolysis of the cyclic ester bond of benzoxazolinones by the FDB1 cluster gamma-lactamase MBL1 to aminophenols. MBL1 is able to convert BOA into 2-aminophenol (2-AP), as well as MBOA into 5-methoxy-2-aminophenol (2-AMP). The FDB2 cluster N-malonyltransferase FDB2/NAT1 then metabolizes aminophenols via N-malonylation to non-toxic malonamic acids. FDB2/NAT1 converts 2-AP into N-(2-hydroxyphenyl) malonamic acid (HPMA) and 2-AMP into N-(2-hydroxy-4-methoxyphenyl) malonamic acid (HMPMA). The duplicated dienlactone hydrolases DLH1 and DLH2 may provide redundant function for hydrolyzing the lactone moiety in the BOA molecule. The roles of the amidases and other enzymes encoded by the 2 FDB clusters have not been identified so far. This Gibberella moniliformis (strain M3125 / FGSC 7600) (Maize ear and stalk rot fungus) protein is Dienlactone hydrolase 2.